Reading from the N-terminus, the 505-residue chain is DEAD-box ATP-dependent RNA helicase 41 (505 aa).

An HIT-type zinc finger spans residues 27-56; it reads GEPKCVICSRYGEYICDETNDDVCSLECKQ. Positions 110-138 match the Q motif motif; it reads LTFTSCGLPPKLLLNLETAGYDFPTPIQM. The 178-residue stretch at 141-318 folds into the Helicase ATP-binding domain; that stretch reads IPAALTGKSL…GSLAKEIILV (178 aa). 154–161 serves as a coordination point for ATP; the sequence is ADTGSGKT. Positions 267 to 270 match the DEAD box motif; that stretch reads DEVD. A Helicase C-terminal domain is found at 342-492; sequence KKQKLFDILR…AIPKELINLT (151 aa).

Belongs to the DEAD box helicase family. DDX59 subfamily.

The catalysed reaction is ATP + H2O = ADP + phosphate + H(+). The chain is DEAD-box ATP-dependent RNA helicase 41 (RH41) from Arabidopsis thaliana (Mouse-ear cress).